Here is a 190-residue protein sequence, read N- to C-terminus: Nodulation protein L (190 aa).

Belongs to the transferase hexapeptide repeat family.

Functionally, acetyltransferase implicated in the O-acetylation of Nod factors. The sequence is that of Nodulation protein L (nodL) from Rhizobium leguminosarum bv. viciae.